We begin with the raw amino-acid sequence, 417 residues long: D-amino acid dehydrogenase (417 aa).

Residue 3–17 participates in FAD binding; that stretch reads VVILGSGVVGVSTAW.

Belongs to the DadA oxidoreductase family. Requires FAD as cofactor.

The catalysed reaction is a D-alpha-amino acid + A + H2O = a 2-oxocarboxylate + AH2 + NH4(+). It functions in the pathway amino-acid degradation; D-alanine degradation; NH(3) and pyruvate from D-alanine: step 1/1. In terms of biological role, oxidative deamination of D-amino acids. The sequence is that of D-amino acid dehydrogenase from Pectobacterium carotovorum subsp. carotovorum (strain PC1).